Consider the following 513-residue polypeptide: Putative BTB/POZ domain-containing protein L55 (513 aa).

The region spanning serine 11 to aspartate 83 is the BTB domain.

This sequence belongs to the mimivirus BTB/WD family.

This chain is Putative BTB/POZ domain-containing protein L55, found in Acanthamoeba polyphaga (Amoeba).